We begin with the raw amino-acid sequence, 99 residues long: Large ribosomal subunit protein eL30 (99 aa).

The protein belongs to the eukaryotic ribosomal protein eL30 family.

In Pyrococcus horikoshii (strain ATCC 700860 / DSM 12428 / JCM 9974 / NBRC 100139 / OT-3), this protein is Large ribosomal subunit protein eL30 (rpl30e).